A 241-amino-acid chain; its full sequence is Uridylate kinase (241 aa).

9–10 (GS) contributes to the ATP binding site. A UMP-binding site is contributed by Gly44. Positions 45 and 49 each coordinate ATP. Residues Asp66 and 114–120 (VVAGQTT) each bind UMP. ATP is bound by residues Thr140, Phe146, and Asp149.

It belongs to the UMP kinase family. As to quaternary structure, homohexamer.

It is found in the cytoplasm. It carries out the reaction UMP + ATP = UDP + ADP. The protein operates within pyrimidine metabolism; CTP biosynthesis via de novo pathway; UDP from UMP (UMPK route): step 1/1. Its activity is regulated as follows. Inhibited by UTP. In terms of biological role, catalyzes the reversible phosphorylation of UMP to UDP. The chain is Uridylate kinase from Halobacterium salinarum (strain ATCC 29341 / DSM 671 / R1).